Consider the following 164-residue polypeptide: Transcription antitermination protein NusB (164 aa).

Positions 144 to 164 are disordered; it reads KNGRGLIDHTPPRAAKTDAKS. Residues 149–164 are compositionally biased toward basic and acidic residues; the sequence is LIDHTPPRAAKTDAKS.

The protein belongs to the NusB family.

In terms of biological role, involved in transcription antitermination. Required for transcription of ribosomal RNA (rRNA) genes. Binds specifically to the boxA antiterminator sequence of the ribosomal RNA (rrn) operons. The polypeptide is Transcription antitermination protein NusB (Chlorobium phaeovibrioides (strain DSM 265 / 1930) (Prosthecochloris vibrioformis (strain DSM 265))).